A 3432-amino-acid polypeptide reads, in one-letter code: Hybrid signal transduction histidine kinase G (3432 aa).

Composition is skewed to low complexity over residues 44–68 (HFSN…TTTN), 76–90 (SQLQ…QQNN), and 126–145 (QPQQ…SQKQ). Disordered regions lie at residues 44-109 (HFSN…TNSS) and 124-240 (DDQP…HNIN). Residues 146-157 (TSQLNISGNNSG) are compositionally biased toward polar residues. Low complexity-rich tracts occupy residues 165–177 (TISN…NFIH) and 187–238 (KTPI…NNHN). The Protein kinase domain occupies 263–792 (LSFKHGYNSG…YGLKKDLEMF (530 aa)). ATP is bound by residues 269 to 277 (YNSGLGGNF) and Lys-305. Positions 399 to 419 (NNNNNNNNSYNNNYNNNNNNN) are enriched in low complexity. 2 disordered regions span residues 399–426 (NNNN…TSPI) and 443–542 (FQLN…STPL). Residues 443–467 (FQLNSSTNSTGSPLIITSQPMPFQL) are compositionally biased toward polar residues. Positions 468-479 (NSNSNTTASSSS) are enriched in low complexity. The segment covering 480–490 (PITHSNLNTAI) has biased composition (polar residues). Low complexity predominate over residues 491–508 (TSTTTSNSNSNNNSNNNN). A compositionally biased stretch (gly residues) spans 509–525 (SGGGGGGGGGGGGGGGT). Asp-585 (proton acceptor; for protein kinase activity) is an active-site residue. The interval 863-1121 (GKEFIIVSGL…TMKIVLKNLD (259 aa)) is AAA. 871-878 (GLSGVGKT) contributes to the ATP binding site. 2 disordered regions span residues 1040-1077 (NNFS…NNNI) and 1261-1290 (TTTT…NNSD). The segment covering 1261-1288 (TTTTNNNTTNNTNNNNTNNNNNNTNGNN) has biased composition (low complexity). Transmembrane regions (helical) follow at residues 1567 to 1587 (VMVI…TLLL) and 1599 to 1619 (ISSW…IGHF). The TPR repeat unit spans residues 1965-1998 (SQLMLAKAEFERINGNFEQAMEYFSEAISLAQQF). 2 disordered regions span residues 2071-2095 (EYSN…QASI) and 2299-2349 (GYNN…NNNK). The segment covering 2073–2095 (SNNNNNNNSNNNNNNANQSQASI) has biased composition (low complexity). Residues 2215-2465 (YFDRLLKRLM…SNARLFIKVN (251 aa)) enclose the GAF domain. One can recognise a Histidine kinase domain in the interval 2491 to 2769 (NMSHEMRTPL…TFHFCVELGK (279 aa)). Residue His-2494 is modified to Phosphohistidine; by autocatalysis. The segment covering 2637–2648 (TTTNNKKQLNTD) has biased composition (low complexity). 5 disordered regions span residues 2637–2673 (TTTN…SIDL), 2785–2815 (LLNN…NNNN), 2917–3030 (LSPK…NNNS), 3134–3160 (NNNI…HSQY), and 3247–3281 (NSIS…TITT). Acidic residues predominate over residues 2649–2673 (NDGDDDDDDDNENLDENNEDTSIDL). Low complexity-rich tracts occupy residues 2787–2815 (NNNN…NNNN), 2935–3029 (LSSS…HNNN), and 3134–3145 (NNNINNINNNNN). Positions 3305-3424 (KILIVEDNEM…DLRYVINRYG (120 aa)) constitute a Response regulatory domain. Asp-3356 carries the 4-aspartylphosphate modification.

This sequence belongs to the protein kinase superfamily. Ser/Thr protein kinase family. Activation probably requires transfer of a phosphate group between a histidine in the kinase core (transmitter) domain and an aspartate of the receiver domain.

It localises to the membrane. It catalyses the reaction ATP + protein L-histidine = ADP + protein N-phospho-L-histidine.. The enzyme catalyses L-seryl-[protein] + ATP = O-phospho-L-seryl-[protein] + ADP + H(+). The catalysed reaction is L-threonyl-[protein] + ATP = O-phospho-L-threonyl-[protein] + ADP + H(+). In terms of biological role, acts as a receptor histidine kinase for a signal transduction pathway. This protein undergoes an ATP-dependent autophosphorylation at a conserved histidine residue in the kinase core, and a phosphoryl group is then transferred to a conserved aspartate residue in the receiver domain. This Dictyostelium discoideum (Social amoeba) protein is Hybrid signal transduction histidine kinase G (dhkG).